The sequence spans 114 residues: MFGAMLRYLIGISFFADSRFPWATLTINLLGSFLLAWLTSYVFKKVRLSPHLSTAIGTGFVGSFTTFSTLSVETISLFQDGHNFLAMVYVLVSLLGGLTMSHLGFKVSKEVQKS.

The next 3 helical transmembrane spans lie at 23-43, 52-72, and 84-104; these read ATLTINLLGSFLLAWLTSYVF, LSTAIGTGFVGSFTTFSTLSV, and FLAMVYVLVSLLGGLTMSHLG. 2 residues coordinate Na(+): G62 and T65.

The protein belongs to the fluoride channel Fluc/FEX (TC 1.A.43) family.

The protein localises to the cell membrane. It catalyses the reaction fluoride(in) = fluoride(out). Na(+) is not transported, but it plays an essential structural role and its presence is essential for fluoride channel function. Fluoride-specific ion channel. Important for reducing fluoride concentration in the cell, thus reducing its toxicity. The polypeptide is Fluoride-specific ion channel FluC 1 (Desulfitobacterium hafniense (strain Y51)).